An 84-amino-acid chain; its full sequence is UPF0297 protein Csac_1773 (84 aa).

The protein belongs to the UPF0297 family.

The polypeptide is UPF0297 protein Csac_1773 (Caldicellulosiruptor saccharolyticus (strain ATCC 43494 / DSM 8903 / Tp8T 6331)).